The chain runs to 241 residues: Gamma-interferon-inducible lysosomal thiol reductase-like protein (241 aa).

A signal peptide spans 1-18 (MLFKSLLLLSVYAVTCYG). N-linked (GlcNAc...) asparagine glycans are attached at residues N105 and N152. Residues 218 to 235 (STGSAISSLGMIVTVVAV) form a helical membrane-spanning segment.

It belongs to the GILT family. In terms of tissue distribution, salivary gland (at protein level). Low-level expression in midgut (at protein level). Expressed in head and leg tissues. Ovary. Fat body. (Microbial infection) Detected with Plasmodium berghei sporozoites isolated from the saliva of infected Anopheles gambiae mosquitoes (at protein level).

It localises to the membrane. In terms of biological role, required for normal development of ovary and testis. Its function is as follows. (Microbial infection) Interacts with the surface of Plasmodium berghei sporozoites. Reduces P.berghei sporozoite cell traversal activity and transmission. Limits the motility of P.berghei sporozoites. Decreases the levels of host liver infection by P.berghei sporozoites. Does not affect P.berghei sporozoite viability. Indirectly promotes P.berghei survival in mosquitoes by influencing ovarian development and the subsequent production of 20-hydroxyecdysone and vitellogenin, which, in turn, modulates TEP1-dependent parasite killing. Promotes P.berghei infection in mosquitoes, most likely impacting the oocyst stage of parasite development. (Microbial infection) Promotes Plasmodium falciparum survival in mosquitoes. This chain is Gamma-interferon-inducible lysosomal thiol reductase-like protein, found in Anopheles gambiae (African malaria mosquito).